The sequence spans 533 residues: uncharacterized protein (533 aa).

5 helical membrane-spanning segments follow: residues 4–23 (FLAANPLIALVVILAVGLAI), 28–47 (VFGLSLGAAAVLFVALVVST), 57–79 (IVYQLGLAMFVYVIGLSAGPAFF), 86–108 (GWKLTIFMLLLLATLIGLAWVLI), and 151–173 (VIGYSLAYPGAVLGSIVVAAVGA). Positions 263–347 (LGEERETKIE…VAEVRRFLGD (85 aa)) constitute an RCK C-terminal domain. The next 4 membrane-spanning stretches (helical) occupy residues 352–374 (LADVNLLPLAIGLSLGLLLGAIP), 379–401 (GGTTMSLGFGGGPIIAGLILGAL), 422–444 (LGLALFLAGVGTSAGAGFRAALT), and 454–476 (GGLVITLASALLCAVIGMWVLRL).

Belongs to the AAE transporter (TC 2.A.81) family.

The protein resides in the cell membrane. This is an uncharacterized protein from Corynebacterium glutamicum (strain ATCC 13032 / DSM 20300 / JCM 1318 / BCRC 11384 / CCUG 27702 / LMG 3730 / NBRC 12168 / NCIMB 10025 / NRRL B-2784 / 534).